Here is a 138-residue protein sequence, read N- to C-terminus: Phospholipase A2 EC3 (138 aa).

Residues 1-16 (MRTLWIVAVWLMGVEG) form the signal peptide. 7 cysteine pairs are disulfide-bonded: C42–C131, C44–C60, C59–C111, C65–C138, C66–C104, C73–C97, and C91–C102. Ca(2+)-binding residues include Y43, G45, and G47. H63 is a catalytic residue. Residue D64 coordinates Ca(2+). The active site involves D105.

This sequence belongs to the phospholipase A2 family. Group II subfamily. Requires Ca(2+) as cofactor.

It is found in the secreted. The enzyme catalyses a 1,2-diacyl-sn-glycero-3-phosphocholine + H2O = a 1-acyl-sn-glycero-3-phosphocholine + a fatty acid + H(+). PA2 catalyzes the calcium-dependent hydrolysis of the 2-acyl groups in 3-sn-phosphoglycerides. The sequence is that of Phospholipase A2 EC3 from Echis coloratus (Carpet viper).